A 673-amino-acid chain; its full sequence is Methionine--tRNA ligase (673 aa).

Residues 13-23 (PYTNGFCHLGH) carry the 'HIGH' region motif. Zn(2+) is bound by residues Cys144, Cys147, Cys156, and Cys160. Positions 325–329 (KFSKS) match the 'KMSKS' region motif. ATP is bound at residue Lys328. In terms of domain architecture, tRNA-binding spans 575–673 (DVAKLDLRVG…KDVPEGTKVH (99 aa)).

This sequence belongs to the class-I aminoacyl-tRNA synthetase family. MetG type 1 subfamily. As to quaternary structure, homodimer. Requires Zn(2+) as cofactor.

It is found in the cytoplasm. It catalyses the reaction tRNA(Met) + L-methionine + ATP = L-methionyl-tRNA(Met) + AMP + diphosphate. Is required not only for elongation of protein synthesis but also for the initiation of all mRNA translation through initiator tRNA(fMet) aminoacylation. This chain is Methionine--tRNA ligase, found in Methanocorpusculum labreanum (strain ATCC 43576 / DSM 4855 / Z).